Here is an 84-residue protein sequence, read N- to C-terminus: UPF0473 protein CLD_2004 (84 aa).

The protein belongs to the UPF0473 family.

In Clostridium botulinum (strain Okra / Type B1), this protein is UPF0473 protein CLD_2004.